Reading from the N-terminus, the 133-residue chain is Salivary cystatin-L (133 aa).

The N-terminal stretch at 1–19 (MTASFALVLLLGGVAVCIA) is a signal peptide. The Cystatin domain maps to 29–115 (KANHQANPEY…VAQRTCTTVV (87 aa)).

This sequence belongs to the cystatin family. As to expression, salivary gland.

Its subcellular location is the secreted. Inhibitor of cysteine proteinases. Inhibits host cathepsin L (CTSL) and S (CTSS). Modulates production of various cytokines and chemokines in lipopolysaccharide (LPS)-stimulated mouse dendritic cell. Suppresses maturation of mouse bone-marrow-derived dendritic cells (BMDCs). This Ixodes persulcatus (Taiga tick) protein is Salivary cystatin-L.